The following is a 223-amino-acid chain: PKHD-type hydroxylase syc1482_d (223 aa).

One can recognise a Fe2OG dioxygenase domain in the interval 78-176 (RVHSLLFSRY…RFACVGWVQS (99 aa)). 3 residues coordinate Fe cation: His-96, Asp-98, and His-157. Arg-167 lines the 2-oxoglutarate pocket.

Fe(2+) serves as cofactor. It depends on L-ascorbate as a cofactor.

The chain is PKHD-type hydroxylase syc1482_d from Synechococcus sp. (strain ATCC 27144 / PCC 6301 / SAUG 1402/1) (Anacystis nidulans).